A 152-amino-acid chain; its full sequence is Diamine acetyltransferase (152 aa).

In terms of domain architecture, N-acetyltransferase spans 5–152; the sequence is FEVRKATIDD…SFLDLTPKSD (148 aa). Catalysis depends on Y127, which acts as the Proton donor.

This sequence belongs to the acetyltransferase family. In terms of assembly, homotetramer.

The protein localises to the cytoplasm. It carries out the reaction an alkane-alpha,omega-diamine + acetyl-CoA = an N-acetylalkane-alpha,omega-diamine + CoA + H(+). The protein operates within amine and polyamine degradation; putrescine degradation; N-acetylputrescine from putrescine: step 1/1. Its function is as follows. Enzyme which catalyzes the acetylation of polyamines. Displays higher substrate specificity for spermine than for spermidine. May function to acetylate host-derived polyamines, thus alleviating the necessity for de novo synthesis of these molecules. The protein is Diamine acetyltransferase of Cryptosporidium parvum (strain Iowa II).